The following is a 150-amino-acid chain: Transcriptional repressor NrdR (150 aa).

A zinc finger lies at 3–34; sequence CPFCHHPQSRVIDSRTVENGFVTRRRRQCTKC. In terms of domain architecture, ATP-cone spans 46–136; sequence LLVEKRNGVT…VYKSFSSMED (91 aa).

Belongs to the NrdR family. It depends on Zn(2+) as a cofactor.

Its function is as follows. Negatively regulates transcription of bacterial ribonucleotide reductase nrd genes and operons by binding to NrdR-boxes. In Corynebacterium kroppenstedtii (strain DSM 44385 / JCM 11950 / CIP 105744 / CCUG 35717), this protein is Transcriptional repressor NrdR.